The sequence spans 68 residues: Small ribosomal subunit protein bS21 (68 aa).

Belongs to the bacterial ribosomal protein bS21 family.

This is Small ribosomal subunit protein bS21 from Ruegeria sp. (strain TM1040) (Silicibacter sp.).